The following is a 312-amino-acid chain: MEISVFGGGAWGRALAFAFGEKNEVKIISRRDLNEPLKKLNDALISKGSAPIEQVDLETGLKASLYVVAISVQHLREWFQNASLPKNAKVLIASKGIEVLNKAFVSEIAKDFIEPNHLCFLAGPSFAAEIIQGLPCALVIHSNNQALALEFANKTPSFIRAYAQQDIIGGEIAGAYKNVIAIAGGVCDGLKLGNSAKASLLSRGLVEMQRFGAFFGGKTETFLGLSGAGDLFLTANSILSRNYRVGLGLAQNKPLEVVLEELGEVAEGVKTTNAIVEIAKKYGIYTPIASELALLLKGKSVLESMNDLIRRA.

Trp11, Arg30, Arg31, and Lys95 together coordinate NADPH. Positions 95, 123, and 125 each coordinate sn-glycerol 3-phosphate. Residue Ala127 coordinates NADPH. Sn-glycerol 3-phosphate is bound by residues Lys177, Asp230, Ser240, Arg241, and Asn242. Residue Lys177 is the Proton acceptor of the active site. Arg241 provides a ligand contact to NADPH. 2 residues coordinate NADPH: Val265 and Glu267.

Belongs to the NAD-dependent glycerol-3-phosphate dehydrogenase family.

The protein resides in the cytoplasm. The catalysed reaction is sn-glycerol 3-phosphate + NAD(+) = dihydroxyacetone phosphate + NADH + H(+). It catalyses the reaction sn-glycerol 3-phosphate + NADP(+) = dihydroxyacetone phosphate + NADPH + H(+). It participates in membrane lipid metabolism; glycerophospholipid metabolism. Its function is as follows. Catalyzes the reduction of the glycolytic intermediate dihydroxyacetone phosphate (DHAP) to sn-glycerol 3-phosphate (G3P), the key precursor for phospholipid synthesis. This is Glycerol-3-phosphate dehydrogenase [NAD(P)+] from Helicobacter acinonychis (strain Sheeba).